A 235-amino-acid polypeptide reads, in one-letter code: Urease accessory protein UreF (235 aa).

It belongs to the UreF family. As to quaternary structure, ureD, UreF and UreG form a complex that acts as a GTP-hydrolysis-dependent molecular chaperone, activating the urease apoprotein by helping to assemble the nickel containing metallocenter of UreC. The UreE protein probably delivers the nickel.

It localises to the cytoplasm. Its function is as follows. Required for maturation of urease via the functional incorporation of the urease nickel metallocenter. This chain is Urease accessory protein UreF, found in Haemophilus influenzae (strain PittGG).